The primary structure comprises 206 residues: LysM and putative peptidoglycan-binding domain-containing protein 2 (206 aa).

In terms of domain architecture, LysM spans 59–103 (IEHCLSPSDTLQGIALKYGVTMEQIKRANKLFSTDCIFLRKSLNI). The tract at residues 184–206 (AQRLKEEDDLRHDGSYATCSYQH) is disordered. Residues 186–197 (RLKEEDDLRHDG) show a composition bias toward basic and acidic residues.

This chain is LysM and putative peptidoglycan-binding domain-containing protein 2 (lysmd2), found in Xenopus laevis (African clawed frog).